The sequence spans 125 residues: Protein MGF 110-4L (125 aa).

The first 29 residues, 1–29 (MLVVFFLGILGLLANQILGLPTQAGGHLR), serve as a signal peptide directing secretion. N-linked (GlcNAc...) asparagine; by host glycosylation occurs at N65. Positions 122–125 (KEDL) match the Prevents secretion from ER motif.

The protein belongs to the asfivirus MGF 110 family.

It is found in the virion. The protein resides in the host endoplasmic reticulum-Golgi intermediate compartment. Functionally, causes the redistribution of lumenal ER protein to an enlarged ERGIC compartment. This is Protein MGF 110-4L from Ornithodoros (relapsing fever ticks).